We begin with the raw amino-acid sequence, 83 residues long: MSNKGQLLQDPFLNALRREHVPVSIYLVNGIKLQGQIESFDQYVVLLRNTVTQMVYKHAISTIVPGRAVNFSTAEPADAESGN.

The region spanning 10 to 69 is the Sm domain; that stretch reads DPFLNALRREHVPVSIYLVNGIKLQGQIESFDQYVVLLRNTVTQMVYKHAISTIVPGRAV.

The protein belongs to the Hfq family. Homohexamer.

Functionally, RNA chaperone that binds small regulatory RNA (sRNAs) and mRNAs to facilitate mRNA translational regulation in response to envelope stress, environmental stress and changes in metabolite concentrations. Also binds with high specificity to tRNAs. The sequence is that of RNA-binding protein Hfq from Paracidovorax citrulli (strain AAC00-1) (Acidovorax citrulli).